Consider the following 207-residue polypeptide: Probable molybdenum cofactor guanylyltransferase (207 aa).

GTP contacts are provided by residues 9–11 (LAG), Lys-21, and Asp-97. Asp-97 contributes to the Mg(2+) binding site.

Belongs to the MobA family. Mg(2+) is required as a cofactor.

The protein localises to the cytoplasm. It catalyses the reaction Mo-molybdopterin + GTP + H(+) = Mo-molybdopterin guanine dinucleotide + diphosphate. Functionally, transfers a GMP moiety from GTP to Mo-molybdopterin (Mo-MPT) cofactor (Moco or molybdenum cofactor) to form Mo-molybdopterin guanine dinucleotide (Mo-MGD) cofactor. This chain is Probable molybdenum cofactor guanylyltransferase, found in Nostoc sp. (strain PCC 7120 / SAG 25.82 / UTEX 2576).